The primary structure comprises 284 residues: MFIISSKNMLLKAQRLGYAVPAFNIHNLETMQVVVETAAELRSPLILAGTPGTYSYAGTGNVVAIARDLAKIWDLPLAVHLDHHEDLADITRKVQAGIRSVMIDGSHSPFEENVALVKSVVELSHRYDASVEAELGRLGGVEDDLGVDAKDALYTNPEQGREFVARTGIDSLAVVIGTAHGLYAAEPKLGFAALPPISERVDVPLVLHGASKLPDSDIRRAISLGVCKVNVATELKIAFSDALKHYFEENPDANEPRHYMKPAKAAMKDVVRKVIHVCGCEGQL.

Residue Asp82 is the Proton donor of the active site. Residues His83 and His180 each coordinate Zn(2+). Residue Gly181 participates in dihydroxyacetone phosphate binding. His208 lines the Zn(2+) pocket. Dihydroxyacetone phosphate-binding positions include 209–211 and 230–233; these read GAS and NVAT.

Belongs to the class II fructose-bisphosphate aldolase family. TagBP aldolase GatY subfamily. Forms a complex with GatZ. Requires Zn(2+) as cofactor.

The catalysed reaction is D-tagatofuranose 1,6-bisphosphate = D-glyceraldehyde 3-phosphate + dihydroxyacetone phosphate. It participates in carbohydrate metabolism; D-tagatose 6-phosphate degradation; D-glyceraldehyde 3-phosphate and glycerone phosphate from D-tagatose 6-phosphate: step 2/2. Its function is as follows. Catalytic subunit of the tagatose-1,6-bisphosphate aldolase GatYZ, which catalyzes the reversible aldol condensation of dihydroxyacetone phosphate (DHAP or glycerone-phosphate) with glyceraldehyde 3-phosphate (G3P) to produce tagatose 1,6-bisphosphate (TBP). Requires GatZ subunit for full activity and stability. Is involved in the catabolism of galactitol and D-tagatose. This Klebsiella oxytoca protein is D-tagatose-1,6-bisphosphate aldolase subunit GatY (gatY).